The sequence spans 372 residues: Transcription factor YY2 (372 aa).

Residues 32 to 102 (MEDIPTESVQ…SDNQLGNDLE (71 aa)) are mediates transcriptional activation. Residues 126–136 (SAASTSTSTQS) are compositionally biased toward low complexity. Disordered regions lie at residues 126-172 (SAAS…WEQK) and 186-210 (TMWS…PPDY). The segment covering 137-146 (RSKKPSKKPS) has biased composition (basic residues). Polar residues-rich tracts occupy residues 154–165 (EANPAGSSSSLG) and 186–196 (TMWSPNDNNDQ). Residues 237–372 (EFTKVKPKRS…LTHVKTKNNP (136 aa)) are mediates transcriptional repression. 4 C2H2-type zinc fingers span residues 254–278 (VPCS…LHIH), 283–305 (HVCA…QLVH), 311–335 (FQCT…LRIH), and 341–365 (FVCP…ILTH).

This sequence belongs to the YY transcription factor family. In terms of tissue distribution, expressed in kidney, liver, spleen and testis but not in colon.

It is found in the nucleus. Its function is as follows. Functions as a multifunctional transcription factor that may exhibit positive and negative control on a large number of genes. May antagonize YY1 and function in development and differentiation. In Homo sapiens (Human), this protein is Transcription factor YY2 (YY2).